A 1099-amino-acid chain; its full sequence is Adenylate cyclase type 7 (1099 aa).

At 1-33 the chain is on the cytoplasmic side; it reads MPAKGRYFLNEGDEGPDQAALYEKYRLTSLHGP. 6 consecutive transmembrane segments (helical) span residues 34 to 54, 63 to 83, 95 to 117, 122 to 142, 147 to 167, and 178 to 198; these read LLLL…SIAF, QVVL…YVLV, ALAL…DSLE, AWEQ…LLPL, AIVA…AVTR, and LGLQ…TGAF. The Cytoplasmic portion of the chain corresponds to 199–595; it reads HKHQLQDASR…YRLVPIPRAR (397 aa). Mg(2+) contacts are provided by Asp-286, Ile-287, and Asp-330. Residues 286 to 291, 328 to 330, and Arg-374 each bind ATP; these read DIVGFT and LGD. The disordered stretch occupies residues 456–476; the sequence is DPRSQQPPPPSHHLSKPKGDA. Residues 479 to 484 form a mediates regulation of adenylate cyclase activity by C5 alpha-induced G- beta and gamma pathway region; it reads KMRASV. The tract at residues 493 to 501 is mediates regulation of adenylate cyclase activity by sphingosine 1-phosphate-induced G alpha 13 pathway; that stretch reads WGAARPFAH. The tract at residues 504–543 is disordered; that stretch reads HRESVSSSETPISNGRRQKAIPLRRHRAPDRSASPKGRLE. Over residues 508 to 518 the composition is skewed to polar residues; it reads VSSSETPISNG. The tract at residues 508-585 is modulates adenylate cyclase activity by modulating the binding of G(s)alpha to the high-affinity G(s)alpha binding site in 7C1a/7C2; the sequence is VSSSETPISN…IFLEKGFERE (78 aa). The segment covering 519 to 531 has biased composition (basic residues); it reads RRQKAIPLRRHRA. Helical transmembrane passes span 596-616, 621-641, and 670-689; these read YDFA…LLVM, TLGV…SFCF, and LVLV…INMP. An N-linked (GlcNAc...) asparagine glycan is attached at Asn-702. The next 3 helical transmembrane spans lie at 719–738, 747–766, and 813–833; these read LLPY…SVFL, MLLT…SPCW, and DLKI…ILLS. Residues 834 to 1099 lie on the Cytoplasmic side of the membrane; that stretch reads RQIDYYCRLD…TAKFQGLGLN (266 aa). ATP contacts are provided by residues Lys-950, 1029–1031, 1036–1040, and Lys-1076; these read DIW and NVASR.

The protein belongs to the adenylyl cyclase class-4/guanylyl cyclase family. Requires Mg(2+) as cofactor. Mn(2+) serves as cofactor. Post-translationally, phosphorylated by PRKCD. Most abundant in heart, spleen and lung.

The protein localises to the membrane. The enzyme catalyses ATP = 3',5'-cyclic AMP + diphosphate. With respect to regulation, activated by the G protein alpha subunit. Activated by the G protein beta and gamma subunit complex. Activated by GNA13 and GNA12. Ethanol and phorbol 12,13-dibutanoate significantly potentiate adenylate cyclase activity generated in response to the activation of the prostanoid receptor by the agonist prostaglandin E1(1-) in a PKC-dependent manner. Inhibited by lithium. Its function is as follows. Catalyzes the formation of cAMP in response to activation of G protein-coupled receptors. Functions in signaling cascades activated namely by thrombin and sphingosine 1-phosphate and mediates regulation of cAMP synthesis through synergistic action of the stimulatory G alpha protein with GNA13. Also, during inflammation, mediates zymosan-induced increase intracellular cAMP, leading to protein kinase A pathway activation in order to modulate innate immune responses through heterotrimeric G proteins G(12/13). Functions in signaling cascades activated namely by dopamine and C5 alpha chain and mediates regulation of cAMP synthesis through synergistic action of the stimulatory G protein with G beta:gamma complex. Functions, through cAMP response regulation, to keep inflammation under control during bacterial infection by sensing the presence of serum factors, such as the bioactive lysophospholipid (LPA) that regulate LPS-induced TNF-alpha production. However, it is also required for the optimal functions of B and T cells during adaptive immune responses by regulating cAMP synthesis in both B and T cells. The chain is Adenylate cyclase type 7 from Mus musculus (Mouse).